Reading from the N-terminus, the 521-residue chain is CDP-diacylglycerol--glycerol-3-phosphate 3-phosphatidyltransferase (521 aa).

ATP is bound at residue 91-98 (ASLYLGKS). PLD phosphodiesterase domains are found at residues 177-203 (GLGLQHMKIYGFDNEVILSGANLSNDY) and 419-457 (NGWSYHAKGIWLSARDKNDANNWKPFITVIGSSNYTRRA). Residues His182, Lys184, and Asp189 contribute to the active site.

This sequence belongs to the CDP-alcohol phosphatidyltransferase class-II family.

It localises to the mitochondrion. It carries out the reaction a CDP-1,2-diacyl-sn-glycerol + sn-glycerol 3-phosphate = a 1,2-diacyl-sn-glycero-3-phospho-(1'-sn-glycero-3'-phosphate) + CMP + H(+). Its pathway is phospholipid metabolism; phosphatidylglycerol biosynthesis; phosphatidylglycerol from CDP-diacylglycerol: step 1/2. In terms of biological role, essential for the viability of mitochondrial petite mutant. Catalyzes the committed step to the synthesis of the acidic phospholipids. This is CDP-diacylglycerol--glycerol-3-phosphate 3-phosphatidyltransferase (PGS1) from Saccharomyces cerevisiae (strain ATCC 204508 / S288c) (Baker's yeast).